A 52-amino-acid polypeptide reads, in one-letter code: Metchnikowin (52 aa).

The signal sequence occupies residues 1–24; the sequence is MQLNLGAIFLALLGVMATATSVLA. Positions 25 to 26 are excised as a propeptide; sequence EP. The interval 28 to 52 is disordered; it reads RHQGPIFDTRPSPFNPNQPRPGPIY. Residues 40-52 show a composition bias toward pro residues; sequence PFNPNQPRPGPIY.

Hemolymph (at protein level). Highest expression in fat body.

It localises to the secreted. Its function is as follows. Potent antifungal and antibacterial activity against Gram-positive bacteria. The protein is Metchnikowin (Mtk) of Drosophila melanogaster (Fruit fly).